Consider the following 320-residue polypeptide: Myeloid-associated differentiation marker (320 aa).

2 consecutive MARVEL domains span residues 25–157 (ALTQ…ARPG) and 162–317 (YMAT…RLVF). A run of 8 helical transmembrane segments spans residues 35 to 55 (LLQL…GAWT), 61 to 81 (WAMF…IVEL), 95 to 115 (FPIT…IIYP), 131 to 151 (AIAA…EVAW), 165 to 185 (TVPG…FAFI), 197 to 217 (LEWC…TILL), 233 to 253 (FLSG…VLWP), and 292 to 312 (LAVS…LVYS).

It belongs to the MAL family.

It localises to the membrane. The sequence is that of Myeloid-associated differentiation marker (Myadm) from Mus musculus (Mouse).